The primary structure comprises 158 residues: Ribonuclease H (158 aa).

The RNase H type-1 domain occupies 1-142; the sequence is MRKQVEIFTD…CDELARAAAM (142 aa). 4 residues coordinate Mg(2+): D10, E48, D70, and D134.

The protein belongs to the RNase H family. As to quaternary structure, monomer. The cofactor is Mg(2+).

The protein localises to the cytoplasm. The enzyme catalyses Endonucleolytic cleavage to 5'-phosphomonoester.. Endonuclease that specifically degrades the RNA of RNA-DNA hybrids. This is Ribonuclease H from Cronobacter sakazakii (strain ATCC BAA-894) (Enterobacter sakazakii).